The primary structure comprises 62 residues: Photosystem II reaction center protein Z (62 aa).

2 consecutive transmembrane segments (helical) span residues 8-28 (AVFALIATSLILVIGVPVVFA) and 41-61 (FSGTSLWIGLVFLVGILNSLI).

Belongs to the PsbZ family. In terms of assembly, PSII is composed of 1 copy each of membrane proteins PsbA, PsbB, PsbC, PsbD, PsbE, PsbF, PsbH, PsbI, PsbJ, PsbK, PsbL, PsbM, PsbT, PsbY, PsbZ, Psb30/Ycf12, at least 3 peripheral proteins of the oxygen-evolving complex and a large number of cofactors. It forms dimeric complexes.

The protein resides in the plastid. The protein localises to the chloroplast thylakoid membrane. In terms of biological role, may control the interaction of photosystem II (PSII) cores with the light-harvesting antenna, regulates electron flow through the 2 photosystem reaction centers. PSII is a light-driven water plastoquinone oxidoreductase, using light energy to abstract electrons from H(2)O, generating a proton gradient subsequently used for ATP formation. This is Photosystem II reaction center protein Z from Piper cenocladum (Ant piper).